Here is a 337-residue protein sequence, read N- to C-terminus: Tryptophan--tRNA ligase (337 aa).

Residues 9 to 11 (RPT) and 17 to 18 (GH) contribute to the ATP site. The 'HIGH' region motif lies at 10-18 (PTGRLHLGH). D137 provides a ligand contact to L-tryptophan. Residues 149 to 151 (GKD), L187, and 195 to 199 (KMSKS) contribute to the ATP site. Residues 195–199 (KMSKS) carry the 'KMSKS' region motif.

It belongs to the class-I aminoacyl-tRNA synthetase family. In terms of assembly, homodimer.

Its subcellular location is the cytoplasm. The enzyme catalyses tRNA(Trp) + L-tryptophan + ATP = L-tryptophyl-tRNA(Trp) + AMP + diphosphate + H(+). Functionally, catalyzes the attachment of tryptophan to tRNA(Trp). In Treponema pallidum (strain Nichols), this protein is Tryptophan--tRNA ligase.